A 106-amino-acid chain; its full sequence is Large ribosomal subunit protein eL42 (106 aa).

The protein belongs to the eukaryotic ribosomal protein eL42 family.

The protein localises to the cytoplasm. In Trypanosoma brucei brucei, this protein is Large ribosomal subunit protein eL42 (RPL44).